Here is a 309-residue protein sequence, read N- to C-terminus: Malate dehydrogenase (309 aa).

NAD(+)-binding positions include 6-11 (GSGRVG) and Asp-31. Positions 80 and 86 each coordinate substrate. NAD(+) is bound by residues Asn-93 and 116 to 118 (TTN). Substrate is bound by residues Asn-118 and Arg-149. The Proton acceptor role is filled by His-173.

Belongs to the LDH/MDH superfamily.

The enzyme catalyses (S)-malate + NAD(+) = oxaloacetate + NADH + H(+). Catalyzes the reversible oxidation of malate to oxaloacetate. In Pyrobaculum aerophilum (strain ATCC 51768 / DSM 7523 / JCM 9630 / CIP 104966 / NBRC 100827 / IM2), this protein is Malate dehydrogenase (mdh).